A 465-amino-acid chain; its full sequence is Alpha-2A adrenergic receptor (465 aa).

At 1-48 (MFRQEQPLAEGSFAPMGSLQPEAGNASWNGTEAPGGGARATPYSLQVT) the chain is on the extracellular side. Asn25 and Asn29 each carry an N-linked (GlcNAc...) asparagine glycan. A helical membrane pass occupies residues 49–74 (LTLVCLAGLLMLFTVFGNVLVIIAVF). Residues 75-85 (TSRALKAPQNL) lie on the Cytoplasmic side of the membrane. Residues 86–111 (FLVSLASADILVATLVIPFSLANEVM) form a helical membrane-spanning segment. Residues 112 to 121 (GYWYFGKAWC) are Extracellular-facing. An intrachain disulfide couples Cys121 to Cys203. A helical membrane pass occupies residues 122-144 (EIYLALDVLFCTSSIVHLCAISL). Residues 145 to 164 (DRYWSITQAIEYNLKRTPRR) are Cytoplasmic-facing. The helical transmembrane segment at 165-188 (IKAIIVTVWVISAVISFPPLISIE) threads the bilayer. Topologically, residues 189 to 207 (KKAGGGGQQPAEPRCEIND) are extracellular. A helical membrane pass occupies residues 208-232 (QKWYVISSCIGSFFAPCLIMILVYV). Residues 233–389 (RIYQIAKRRT…RQNREKRFTF (157 aa)) lie on the Cytoplasmic side of the membrane. The segment at 242 to 377 (TRVPPSRRGP…RGGVAKASRW (136 aa)) is disordered. Basic and acidic residues predominate over residues 313–330 (SSEHAERPPGPRRSERGP). At Ser346 the chain carries Phosphoserine. At Arg368 the chain carries Omega-N-methylarginine. A helical transmembrane segment spans residues 390-414 (VLAVVIGVFVVCWFPFFFTYTLTAV). The Extracellular segment spans residues 415–424 (GCSVPPTLFK). Residues 425 to 445 (FFFWFGYCNSSLNPVIYTIFN) traverse the membrane as a helical segment. The Cytoplasmic segment spans residues 446 to 465 (HDFRRAFKKILCRGDRKRIV). Residue Cys457 is the site of S-palmitoyl cysteine attachment.

The protein belongs to the G-protein coupled receptor 1 family. Adrenergic receptor subfamily. ADRA2A sub-subfamily.

It localises to the cell membrane. In terms of biological role, alpha-2 adrenergic receptors mediate the catecholamine-induced inhibition of adenylate cyclase through the action of G proteins. The sequence is that of Alpha-2A adrenergic receptor from Sus scrofa (Pig).